Consider the following 314-residue polypeptide: Porphobilinogen deaminase (314 aa).

An S-(dipyrrolylmethanemethyl)cysteine modification is found at cysteine 234.

The protein belongs to the HMBS family. As to quaternary structure, monomer. Requires dipyrromethane as cofactor.

It catalyses the reaction 4 porphobilinogen + H2O = hydroxymethylbilane + 4 NH4(+). Its pathway is porphyrin-containing compound metabolism; protoporphyrin-IX biosynthesis; coproporphyrinogen-III from 5-aminolevulinate: step 2/4. Tetrapolymerization of the monopyrrole PBG into the hydroxymethylbilane pre-uroporphyrinogen in several discrete steps. This chain is Porphobilinogen deaminase, found in Mycobacterium ulcerans (strain Agy99).